A 453-amino-acid chain; its full sequence is Tol-Pal system protein TolB (453 aa).

The first 34 residues, methionine 1–leucine 34, serve as a signal peptide directing secretion.

This sequence belongs to the TolB family. In terms of assembly, the Tol-Pal system is composed of five core proteins: the inner membrane proteins TolA, TolQ and TolR, the periplasmic protein TolB and the outer membrane protein Pal. They form a network linking the inner and outer membranes and the peptidoglycan layer.

The protein resides in the periplasm. In terms of biological role, part of the Tol-Pal system, which plays a role in outer membrane invagination during cell division and is important for maintaining outer membrane integrity. TolB occupies a key intermediary position in the Tol-Pal system because it communicates directly with both membrane-embedded components, Pal in the outer membrane and TolA in the inner membrane. This is Tol-Pal system protein TolB from Blochmanniella pennsylvanica (strain BPEN).